The chain runs to 119 residues: Large ribosomal subunit protein bL20 (119 aa).

Belongs to the bacterial ribosomal protein bL20 family.

Functionally, binds directly to 23S ribosomal RNA and is necessary for the in vitro assembly process of the 50S ribosomal subunit. It is not involved in the protein synthesizing functions of that subunit. This is Large ribosomal subunit protein bL20 from Dehalococcoides mccartyi (strain ATCC BAA-2266 / KCTC 15142 / 195) (Dehalococcoides ethenogenes (strain 195)).